Reading from the N-terminus, the 429-residue chain is Enolase (429 aa).

Gln-162 serves as a coordination point for (2R)-2-phosphoglycerate. The active-site Proton donor is the Glu-204. Mg(2+) is bound by residues Asp-241, Glu-286, and Asp-313. 4 residues coordinate (2R)-2-phosphoglycerate: Lys-338, Arg-367, Ser-368, and Lys-389. Lys-338 acts as the Proton acceptor in catalysis.

It belongs to the enolase family. Mg(2+) serves as cofactor.

It localises to the cytoplasm. Its subcellular location is the secreted. It is found in the cell surface. The catalysed reaction is (2R)-2-phosphoglycerate = phosphoenolpyruvate + H2O. The protein operates within carbohydrate degradation; glycolysis; pyruvate from D-glyceraldehyde 3-phosphate: step 4/5. In terms of biological role, catalyzes the reversible conversion of 2-phosphoglycerate (2-PG) into phosphoenolpyruvate (PEP). It is essential for the degradation of carbohydrates via glycolysis. The chain is Enolase from Shouchella clausii (strain KSM-K16) (Alkalihalobacillus clausii).